Consider the following 386-residue polypeptide: Cytochrome b (386 aa).

The next 4 membrane-spanning stretches (helical) occupy residues 32-52, 76-98, 113-133, and 179-199; these read TGSL…FTAM, YLIR…GHIG, VWVI…TGYC, and FFAL…MHLM. Heme b contacts are provided by H82 and H96. Heme b is bound by residues H183 and H197. Residue H202 participates in a ubiquinone binding. A run of 4 helical transmembrane segments spans residues 225–245, 289–309, 321–341, and 348–368; these read FVFK…TFVF, LGGV…PVTD, FSKT…QLGQ, and FIEM…VLVP.

Belongs to the cytochrome b family. As to quaternary structure, fungal cytochrome b-c1 complex contains 10 subunits; 3 respiratory subunits, 2 core proteins and 5 low-molecular weight proteins. Cytochrome b-c1 complex is a homodimer. Heme b is required as a cofactor.

It localises to the mitochondrion inner membrane. Its function is as follows. Component of the ubiquinol-cytochrome c reductase complex (complex III or cytochrome b-c1 complex) that is part of the mitochondrial respiratory chain. The b-c1 complex mediates electron transfer from ubiquinol to cytochrome c. Contributes to the generation of a proton gradient across the mitochondrial membrane that is then used for ATP synthesis. The polypeptide is Cytochrome b (COB) (Wickerhamomyces pijperi (Yeast)).